Here is an 83-residue protein sequence, read N- to C-terminus: Protein FAM240A (83 aa).

The protein belongs to the FAM240 family.

The chain is Protein FAM240A from Homo sapiens (Human).